Here is a 762-residue protein sequence, read N- to C-terminus: Palmitoyltransferase ZDHHC8 (762 aa).

The Cytoplasmic portion of the chain corresponds to 1–13 (MPRSPGTRLKPAK). A helical transmembrane segment spans residues 14–34 (YIPVATAAALLVGSSTLFFVF). Over 35–52 (TCPWLTRAVSPAIPVYNG) the chain is Lumenal. Residues 53–73 (ILFLFVLANFSMATFMDPGVF) traverse the membrane as a helical segment. Residues 74–148 (PRADEDEDKE…NCIGRRNYRY (75 aa)) lie on the Cytoplasmic side of the membrane. Residues 104–154 (KWCATCHFYRPPRCSHCSVCDNCVEDFDHHCPWVNNCIGRRNYRYFFLFLL) enclose the DHHC domain. C134 serves as the catalytic S-palmitoyl cysteine intermediate. Residues 149-169 (FFLFLLSLSAHMVGVVAFGLL) form a helical membrane-spanning segment. The Lumenal segment spans residues 170 to 190 (YVLNHSEGLGAAHTTITMAVM). A helical transmembrane segment spans residues 191 to 211 (CVAGLFFIPVIGLTGFHVVLV). The Cytoplasmic portion of the chain corresponds to 212-762 (TRGRTTNEQV…VGGTTYEISV (551 aa)). Disordered regions lie at residues 289–350 (GLKA…PPTP), 362–423 (GPKT…TTDA), 436–537 (ASRR…SPVR), and 551–574 (ERKD…GDSG). S335 bears the Phosphoserine mark. Pro residues predominate over residues 408–417 (LRPPYPPSPP). At R439 the chain carries Omega-N-methylarginine. Polar residues predominate over residues 471-485 (RNGSLSYDSLLNPGS). Residues 511 to 521 (PSDPPRPPPRS) are compositionally biased toward pro residues. The span at 551–562 (ERKDREERERLL) shows a compositional bias: basic and acidic residues. Residues S603 and S624 each carry the phosphoserine modification. The span at 626-644 (SSLSSSMSRAPRTSSSSLQ) shows a compositional bias: low complexity. 2 disordered regions span residues 626 to 684 (SSLS…SYTG) and 707 to 744 (DHPQ…PARH). Phosphoserine is present on residues S672, S679, S722, and S740.

Belongs to the DHHC palmitoyltransferase family. ERF2/ZDHHC9 subfamily. In terms of tissue distribution, expressed in brain cortex and hippocampus.

The protein localises to the golgi apparatus membrane. Its subcellular location is the mitochondrion membrane. The catalysed reaction is L-cysteinyl-[protein] + hexadecanoyl-CoA = S-hexadecanoyl-L-cysteinyl-[protein] + CoA. Palmitoyltransferase that catalyzes the addition of palmitate onto various protein substrates and therefore functions in several unrelated biological processes. Through the palmitoylation of ABCA1 regulates the localization of the transporter to the plasma membrane and thereby regulates its function in cholesterol and phospholipid efflux. Could also pamitoylate the D(2) dopamine receptor DRD2 and regulate its stability and localization to the plasma membrane. Could also play a role in glutamatergic transmission. This chain is Palmitoyltransferase ZDHHC8, found in Mus musculus (Mouse).